Consider the following 327-residue polypeptide: Complex I intermediate-associated protein 30, mitochondrial (327 aa).

The N-terminal 24 residues, 1-24 (MALVHKLLRDTYILRKFSKPTSAL), are a transit peptide targeting the mitochondrion. Residues 42 to 63 (PVASPGKASSQRKTEGDLQGDH) form a disordered region. Residues 53–63 (RKTEGDLQGDH) show a composition bias toward basic and acidic residues. S318 carries the phosphoserine modification.

The protein belongs to the CIA30 family. As to quaternary structure, part of the mitochondrial complex I assembly/MCIA complex that comprises at least the core subunits TMEM126B, NDUFAF1, ECSIT and ACAD9 and complement subunits such as COA1 and TMEM186. Interacts with ECSIT. Interacts with ACAD9. At early stages of complex I assembly, it is found in intermediate subcomplexes that contain different subunits including NDUFB6, NDUFA6, NDUFA9, NDUFS3, NDUFS7, ND1, ND2 and ND3. Interacts with TMEM70 and TMEM242.

It localises to the mitochondrion. Its subcellular location is the mitochondrion matrix. In terms of biological role, as part of the MCIA complex, involved in the assembly of the mitochondrial complex I. The polypeptide is Complex I intermediate-associated protein 30, mitochondrial (Gorilla gorilla gorilla (Western lowland gorilla)).